Reading from the N-terminus, the 380-residue chain is Septin homolog spn6 (380 aa).

In terms of domain architecture, Septin-type G spans 27–297; sequence KECGLTIMLC…ERYRREQLTN (271 aa). Positions 37-44 are G1 motif; sequence GASGTGKT. GTP is bound by residues 37–44, Thr72, Gly98, 177–185, and Arg246; these read GASGTGKT and KADTFTTPE. Positions 95 to 98 are G3 motif; sequence DTPG. The segment at 176–179 is G4 motif; sequence AKAD. Residues 304 to 380 are a coiled coil; it reads KLKKEHYERL…KSYKGRGHKK (77 aa).

It belongs to the TRAFAC class TrmE-Era-EngA-EngB-Septin-like GTPase superfamily. Septin GTPase family. As to quaternary structure, component of the sporulation-specific septin complex composed of at least spn2, spn5, spn6 and spn7.

It localises to the cytoplasm. Its subcellular location is the forespore membrane. Septin-like protein involved in the correct orientation of forespore membrane extension during sporulation. In Schizosaccharomyces pombe (strain 972 / ATCC 24843) (Fission yeast), this protein is Septin homolog spn6 (spn6).